The primary structure comprises 509 residues: Heat shock 70 kDa protein 14 (509 aa).

This sequence belongs to the heat shock protein 70 family. In terms of assembly, component of ribosome-associated complex (RAC), a heterodimer composed of Hsp70/DnaK-type chaperone HSPA14 and Hsp40/DnaJ-type chaperone DNAJC2.

It is found in the cytoplasm. The protein localises to the cytosol. In terms of biological role, component of the ribosome-associated complex (RAC), a complex involved in folding or maintaining nascent polypeptides in a folding-competent state. In the RAC complex, binds to the nascent polypeptide chain, while DNAJC2 stimulates its ATPase activity. This chain is Heat shock 70 kDa protein 14 (HSPA14), found in Macaca fascicularis (Crab-eating macaque).